The chain runs to 1081 residues: Teashirt homolog 3 (1081 aa).

Disordered stretches follow at residues 25–104 (LVED…EVQV), 141–161 (PSSE…SSCG), and 238–257 (HYRD…WSKP). Over residues 26-37 (VEDDVEPEEQAA) the composition is skewed to acidic residues. Residues 68-87 (SSHEMDSESHISETSDRMAD) are compositionally biased toward basic and acidic residues. 2 C2H2-type zinc fingers span residues 214 to 238 (FRCK…ETGH) and 275 to 299 (LKCM…KTKH). Over residues 238 to 247 (HYRDDNHETD) the composition is skewed to basic and acidic residues. Residues 325–346 (SLELELPSSPDSTGGTPKATLS) form a disordered region. The C2H2-type 3; atypical zinc finger occupies 387–410 (KCMECGSSHDTLQELTAHMMVTGH). A compositionally biased stretch (basic and acidic residues) spans 474-491 (VDKEKAVPDEKPKEREKP). Disordered stretches follow at residues 474–499 (VDKE…EKYD), 626–699 (EKMK…KPLS), 792–824 (LTKG…TVTT), and 855–897 (TESH…RQSN). Residues 606–630 (NFHAMEELVKKVTEKVAKVEEKMKE) are a coiled coil. A compositionally biased stretch (polar residues) spans 660–670 (SDGSFKSQENS). S682 is modified (phosphoserine). Composition is skewed to low complexity over residues 800 to 824 (GCSL…TVTT) and 856 to 869 (ESHT…SSIS). The segment at residues 891–961 (RKGRQSNWNP…NVKYQLRRTG (71 aa)) is a DNA-binding region (homeobox; atypical). 2 consecutive C2H2-type zinc fingers follow at residues 976–998 (FFCN…LESH) and 1041–1064 (YQCK…SKTH).

Belongs to the teashirt C2H2-type zinc-finger protein family. As to quaternary structure, interacts (via N-terminus) with HDAC1 and HDAC2; the interaction is direct. Found in a trimeric complex with APBB1 and HDAC1; the interaction between HDAC1 and APBB1 is mediated by TSHZ3. Interacts (via homeobox domain) with APBB1 (via PID domain 1). Expressed in corticostriatal neurons.

It is found in the nucleus. Its subcellular location is the cell projection. It localises to the growth cone. In terms of biological role, transcriptional regulator involved in developmental processes. Functions in association with APBB1, SET and HDAC factors as a transcriptional repressor, that inhibits the expression of CASP4. TSHZ3-mediated transcription repression involves the recruitment of histone deacetylases HDAC1 and HDAC2. Associates with chromatin in a region surrounding the CASP4 transcriptional start site(s). Regulates the development of neurons involved in both respiratory rhythm and airflow control. Promotes maintenance of nucleus ambiguus (nA) motoneurons, which govern upper airway function, and establishes a respiratory rhythm generator (RRG) activity compatible with survival at birth. Involved in the differentiation of the proximal uretic smooth muscle cells during developmental processes. Involved in the up-regulation of myocardin, that directs the expression of smooth muscle cells in the proximal ureter. Involved in the modulation of glutamatergic synaptic transmission and long-term synaptic potentiation. The polypeptide is Teashirt homolog 3 (Tshz3) (Mus musculus (Mouse)).